We begin with the raw amino-acid sequence, 174 residues long: Male-enhanced antigen 1 (174 aa).

2 disordered regions span residues 1–83 (MAAV…DGAA) and 95–123 (HLPD…IPMD). Acidic residues-rich tracts occupy residues 38–48 (SSEEPEEEQEE), 65–82 (PEQE…EDGA), and 101–110 (LESEDEDEEG). A Phosphoserine modification is found at serine 103.

Highly expressed in testis. Transcripts can be found in primary and secondary spermatocytes, and spermatids, but the protein itself is only detected in spermatids. No expression in Leydig cells, spermatogonia, or sperm. Very weak expression in the heart, kidney, spleen, thymus and ovary.

Its function is as follows. May play an important role in spermatogenesis and/or testis development. This is Male-enhanced antigen 1 (Mea1) from Mus musculus (Mouse).